The primary structure comprises 271 residues: Sec-independent protein translocase protein TatC (271 aa).

The next 5 helical transmembrane spans lie at 24 to 44 (ISVG…EQIF), 78 to 98 (FFAG…LFIA), 112 to 132 (FLFV…YFVF), 159 to 179 (LVIK…GLLL), and 215 to 235 (FTQV…IFFG). Residues 247–271 (AAEEAQWAADHNVDDDDVDHPEHKA) form a disordered region.

Belongs to the TatC family. As to quaternary structure, the Tat system comprises two distinct complexes: a TatABC complex, containing multiple copies of TatA, TatB and TatC subunits, and a separate TatA complex, containing only TatA subunits. Substrates initially bind to the TatABC complex, which probably triggers association of the separate TatA complex to form the active translocon.

Its subcellular location is the cell inner membrane. Functionally, part of the twin-arginine translocation (Tat) system that transports large folded proteins containing a characteristic twin-arginine motif in their signal peptide across membranes. Together with TatB, TatC is part of a receptor directly interacting with Tat signal peptides. The sequence is that of Sec-independent protein translocase protein TatC from Magnetococcus marinus (strain ATCC BAA-1437 / JCM 17883 / MC-1).